The primary structure comprises 507 residues: TOM1-like protein 2 (507 aa).

In terms of domain architecture, VHS spans 20-152; sequence ATDGSLQSED…ELKRRGIEFP (133 aa). At Ser160 the chain carries Phosphoserine. Residue Thr164 is modified to Phosphothreonine. The tract at residues 164 to 200 is disordered; that stretch reads TPQRSVPEMDPAATIPRSQTQPRTTAGTYSSPPPASY. One can recognise a GAT domain in the interval 219-307; sequence EQIARLRSEL…VFLRYERFER (89 aa). Positions 329-334 match the Clathrin-binding motif; that stretch reads NLIDLG. The interval 466–507 is disordered; it reads ERAKAAETVPDLPSPPTEAPAPASNTSTRKKPERSDDALFAL. Residues 498–507 show a composition bias toward basic and acidic residues; it reads ERSDDALFAL.

Belongs to the TOM1 family. In terms of assembly, interacts with clathrin, SRC and TOLLIP. Interacts with MYO6. As to expression, ubiquitously expressed. Splicing pattern displays tissue specific variation.

Functionally, acts as a MYO6/Myosin VI adapter protein that targets myosin VI to endocytic structures. May also play a role in recruiting clathrin to endosomes. May regulate growth factor-induced mitogenic signaling. In Mus musculus (Mouse), this protein is TOM1-like protein 2 (Tom1l2).